Reading from the N-terminus, the 410-residue chain is S-adenosylmethionine synthase (410 aa).

H21 contributes to the ATP binding site. D23 provides a ligand contact to Mg(2+). Position 49 (E49) interacts with K(+). Residues E62 and Q105 each coordinate L-methionine. The tract at residues 105–115 is flexible loop; the sequence is QSQEIGAGVDQ. The interval 107–133 is disordered; it reads QEIGAGVDQSHEVRSGENTDADDQAGA. ATP-binding positions include 180–182, D261, 267–268, A284, and K288; these read DGK and RK. Residue D261 coordinates L-methionine. An L-methionine-binding site is contributed by K292.

It belongs to the AdoMet synthase family. In terms of assembly, homotetramer; dimer of dimers. The cofactor is Mg(2+). Requires K(+) as cofactor.

Its subcellular location is the cytoplasm. It catalyses the reaction L-methionine + ATP + H2O = S-adenosyl-L-methionine + phosphate + diphosphate. It participates in amino-acid biosynthesis; S-adenosyl-L-methionine biosynthesis; S-adenosyl-L-methionine from L-methionine: step 1/1. Functionally, catalyzes the formation of S-adenosylmethionine (AdoMet) from methionine and ATP. The overall synthetic reaction is composed of two sequential steps, AdoMet formation and the subsequent tripolyphosphate hydrolysis which occurs prior to release of AdoMet from the enzyme. The sequence is that of S-adenosylmethionine synthase from Corynebacterium diphtheriae (strain ATCC 700971 / NCTC 13129 / Biotype gravis).